A 100-amino-acid chain; its full sequence is Small ribosomal subunit protein uS14c (100 aa).

It belongs to the universal ribosomal protein uS14 family. Part of the 30S ribosomal subunit.

It localises to the plastid. It is found in the chloroplast. In terms of biological role, binds 16S rRNA, required for the assembly of 30S particles. The polypeptide is Small ribosomal subunit protein uS14c (Chloranthus spicatus (Chulantree)).